The following is a 491-amino-acid chain: Glutamyl-tRNA(Gln) amidotransferase subunit A (491 aa).

Active-site charge relay system residues include Lys79 and Ser158. Catalysis depends on Ser182, which acts as the Acyl-ester intermediate.

Belongs to the amidase family. GatA subfamily. As to quaternary structure, heterotrimer of A, B and C subunits.

It carries out the reaction L-glutamyl-tRNA(Gln) + L-glutamine + ATP + H2O = L-glutaminyl-tRNA(Gln) + L-glutamate + ADP + phosphate + H(+). Allows the formation of correctly charged Gln-tRNA(Gln) through the transamidation of misacylated Glu-tRNA(Gln) in organisms which lack glutaminyl-tRNA synthetase. The reaction takes place in the presence of glutamine and ATP through an activated gamma-phospho-Glu-tRNA(Gln). This Maricaulis maris (strain MCS10) (Caulobacter maris) protein is Glutamyl-tRNA(Gln) amidotransferase subunit A.